A 68-amino-acid chain; its full sequence is uncharacterized protein (68 aa).

An N-terminal signal peptide occupies residues 1–21 (MELYREYPAWLIFLRRTYAVA).

This is an uncharacterized protein from Escherichia coli O157:H7.